We begin with the raw amino-acid sequence, 505 residues long: 2-methylcitrate dehydratase (505 aa).

The protein belongs to the PrpD family. As to quaternary structure, monomer.

The enzyme catalyses (2S,3S)-2-methylcitrate = 2-methyl-cis-aconitate + H2O. It catalyses the reaction citrate = D-threo-isocitrate. The protein operates within organic acid metabolism; propanoate degradation. It participates in carbohydrate metabolism; tricarboxylic acid cycle; isocitrate from oxaloacetate: step 1/2. In terms of biological role, involved in the catabolism of short chain fatty acids (SCFA) via the tricarboxylic acid (TCA)(acetyl degradation route) and via the 2-methylcitrate cycle I (propionate degradation route). Catalyzes the dehydration of 2-methylcitrate (2-MC) to yield the cis isomer of 2-methyl-aconitate. Could also catalyze the dehydration of citrate and the hydration of cis-aconitate. The chain is 2-methylcitrate dehydratase from Mycobacterium tuberculosis (strain ATCC 35801 / TMC 107 / Erdman).